The following is a 1493-amino-acid chain: Son of sevenless homolog (1493 aa).

Positions 244 to 448 constitute a DH domain; that stretch reads TYESVAVDFL…ERVVGCVSDM (205 aa). A PH domain is found at 496 to 606; it reads ELEKDGDLGM…WMAVLVKVTT (111 aa). Positions 656 to 824 constitute an N-terminal Ras-GEF domain; sequence GIPVIKCGTV…TILALIEKRV (169 aa). A Ras-GEF domain is found at 897–1164; sequence HPIEIGRQLT…YNKSLEIQPK (268 aa). 3 disordered regions span residues 1067-1091, 1165-1248, and 1263-1493; these read KSPP…DPEN, GLDT…DDAP, and HPKI…SSNK. Positions 1079-1088 are enriched in basic and acidic residues; the sequence is QQKDDLKASD. Composition is skewed to polar residues over residues 1208–1231 and 1279–1289; these read HSQN…NTPL and SRANQSNSVSL. A compositionally biased stretch (low complexity) spans 1308–1326; sequence STATSPTTLTTTTTPSSAG. Positions 1350–1361 are enriched in polar residues; sequence LTPSRDNSSPSA. A compositionally biased stretch (low complexity) spans 1381–1400; that stretch reads STSSDVSSSPSTSGSTSSAT. Over residues 1402 to 1417 the composition is skewed to basic and acidic residues; sequence ENQEQLRVIFDREESH. A compositionally biased stretch (pro residues) spans 1426–1435; it reads PLPPALPPPR. Positions 1453-1464 are enriched in polar residues; sequence HNSNSPTLSSEQ.

Interacts with cmd-1 in the presence of Ca(2+).

Its function is as follows. Promotes the exchange of Ras-bound GDP by GTP. May regulate signaling pathways downstream of receptor tyrosine kinase, egl-15 and let-23. Required for larval and male spicule development, fluid homeostasis, vulva induction, spermatogenesis, and oogenesis by promoting meiosis prophase exit during oocyte maturation. Required for the delamination of G1 cell by promoting the loss of cell junctions and detachment from the excretory system during larval development. Plays a role in nicotinic acetylcholine receptor (nAChR)-mediated sensitivity to nicotine. Regulates synaptic levels of nAchR subunit lev-1 in the nerve cord. The polypeptide is Son of sevenless homolog (Caenorhabditis elegans).